The chain runs to 200 residues: Probable GTP-binding protein EngB (200 aa).

Positions 22-197 (NLPEYAFIGR…LDYIDSINRS (176 aa)) constitute an EngB-type G domain. Residues 30-37 (GRSNVGKS), 57-61 (GKTLL), 75-78 (DLPG), 142-145 (TKAD), and 173-178 (HFVSSS) each bind GTP. Residues S37 and T59 each coordinate Mg(2+).

The protein belongs to the TRAFAC class TrmE-Era-EngA-EngB-Septin-like GTPase superfamily. EngB GTPase family. Mg(2+) serves as cofactor.

In terms of biological role, necessary for normal cell division and for the maintenance of normal septation. This chain is Probable GTP-binding protein EngB, found in Phocaeicola vulgatus (strain ATCC 8482 / DSM 1447 / JCM 5826 / CCUG 4940 / NBRC 14291 / NCTC 11154) (Bacteroides vulgatus).